We begin with the raw amino-acid sequence, 330 residues long: RNA polymerase sigma factor RpoS (330 aa).

Residues 56-89 form a sigma-70 factor domain-1 region; the sequence is DATQLYLGEIGYSPLLTAEEEVYFARRALRGDVA. A sigma-70 factor domain-2 region spans residues 94–164; that stretch reads MIESNLRLVV…ERAIMNQTRT (71 aa). The Interaction with polymerase core subunit RpoC signature appears at 118–121; that stretch reads DLIE. The sigma-70 factor domain-3 stretch occupies residues 174 to 249; sequence ELNVYLRTAR…DEKENGPEDT (76 aa). The sigma-70 factor domain-4 stretch occupies residues 262–315; that stretch reads WLFELNAKQREVLARRFGLLGYEAATLEDVGREIGLTRERVRQIQVEGLRRLRE. The segment at residues 288–307 is a DNA-binding region (H-T-H motif); sequence LEDVGREIGLTRERVRQIQV.

It belongs to the sigma-70 factor family. RpoS subfamily. Interacts with the RNA polymerase core enzyme.

It localises to the cytoplasm. Its function is as follows. Sigma factors are initiation factors that promote the attachment of RNA polymerase to specific initiation sites and are then released. This sigma factor is the master transcriptional regulator of the stationary phase and the general stress response. In Salmonella dublin, this protein is RNA polymerase sigma factor RpoS.